Consider the following 395-residue polypeptide: MKVKVKHLQRFFSSDASGGIVLIIAAALAMVMANTSVTSGLYHSFLETPVQLRVGALEINKNMLLWINDALMAVFFLLIGLEVKRELIQGSLASRRQAVFPVIAALGGMIVPALVYLAFNAQDPVAREGWAIPAATDIAFALGVLALLGSRVPTALKIFLMALAIIDDLGAIVIIALFYTHDLSMLSLGVAAAAIAVLMALNLSGVRRTGIYILVGAVLWTAVLKSGVHATLAGVIVGFMIPLEEKHGKSPAKALEHVLHPWVAFMILPLFAFANAGVSLQGVTLAGLTSLLPLGIMAGLFIGKPLGISLFCWLALKLKWASLPEGTTCKQIMAVGILCGIGFTMSIFIATLAFGSVDPALINWAKLGILIGSVLSAVVGYLILRQRVTDTRLAV.

A run of 11 helical transmembrane segments spans residues 11–31 (FFSSDASGGIVLIIAAALAMV), 63–83 (MLLWINDALMAVFFLLIGLEV), 99–119 (VFPVIAALGGMIVPALVYLAF), 129–149 (GWAIPAATDIAFALGVLALLG), 158–178 (IFLMALAIIDDLGAIVIIALF), 183–203 (LSMLSLGVAAAAIAVLMALNL), 223–243 (VLKSGVHATLAGVIVGFMIPL), 258–278 (VLHPWVAFMILPLFAFANAGV), 282–302 (GVTLAGLTSLLPLGIMAGLFI), 332–352 (IMAVGILCGIGFTMSIFIATL), and 364–384 (WAKLGILIGSVLSAVVGYLIL).

Belongs to the NhaA Na(+)/H(+) (TC 2.A.33) antiporter family.

The protein localises to the cell inner membrane. It catalyses the reaction Na(+)(in) + 2 H(+)(out) = Na(+)(out) + 2 H(+)(in). Functionally, na(+)/H(+) antiporter that extrudes sodium in exchange for external protons. The polypeptide is Na(+)/H(+) antiporter NhaA 1 (Klebsiella pneumoniae subsp. pneumoniae (strain ATCC 700721 / MGH 78578)).